A 326-amino-acid polypeptide reads, in one-letter code: DNA-directed RNA polymerase subunit alpha (326 aa).

The alpha N-terminal domain (alpha-NTD) stretch occupies residues 1–231 (MQTALLKPKI…DQLSVFAALE (231 aa)). Residues 247–326 (IDPILLRPVD…ENWPPAGLEK (80 aa)) form an alpha C-terminal domain (alpha-CTD) region.

It belongs to the RNA polymerase alpha chain family. In terms of assembly, homodimer. The RNAP catalytic core consists of 2 alpha, 1 beta, 1 beta' and 1 omega subunit. When a sigma factor is associated with the core the holoenzyme is formed, which can initiate transcription.

It carries out the reaction RNA(n) + a ribonucleoside 5'-triphosphate = RNA(n+1) + diphosphate. DNA-dependent RNA polymerase catalyzes the transcription of DNA into RNA using the four ribonucleoside triphosphates as substrates. This Cupriavidus metallidurans (strain ATCC 43123 / DSM 2839 / NBRC 102507 / CH34) (Ralstonia metallidurans) protein is DNA-directed RNA polymerase subunit alpha.